The sequence spans 478 residues: Adenylosuccinate lyase (478 aa).

Substrate is bound by residues 14-15, 81-83, and 107-108; these read RY, KHD, and TS. Catalysis depends on histidine 155, which acts as the Proton donor/acceptor. Glutamine 237 is a binding site for substrate. Serine 285 (proton donor/acceptor) is an active-site residue. Positions 299, 325, 330, and 334 each coordinate substrate.

Belongs to the lyase 1 family. Adenylosuccinate lyase subfamily. Homotetramer. Residues from neighboring subunits contribute catalytic and substrate-binding residues to each active site.

The enzyme catalyses N(6)-(1,2-dicarboxyethyl)-AMP = fumarate + AMP. The catalysed reaction is (2S)-2-[5-amino-1-(5-phospho-beta-D-ribosyl)imidazole-4-carboxamido]succinate = 5-amino-1-(5-phospho-beta-D-ribosyl)imidazole-4-carboxamide + fumarate. Its pathway is purine metabolism; AMP biosynthesis via de novo pathway; AMP from IMP: step 2/2. It functions in the pathway purine metabolism; IMP biosynthesis via de novo pathway; 5-amino-1-(5-phospho-D-ribosyl)imidazole-4-carboxamide from 5-amino-1-(5-phospho-D-ribosyl)imidazole-4-carboxylate: step 2/2. Catalyzes two non-sequential steps in de novo AMP synthesis: converts (S)-2-(5-amino-1-(5-phospho-D-ribosyl)imidazole-4-carboxamido)succinate (SAICAR) to fumarate plus 5-amino-1-(5-phospho-D-ribosyl)imidazole-4-carboxamide, and thereby also contributes to de novo IMP synthesis, and converts succinyladenosine monophosphate (SAMP) to AMP and fumarate. This is Adenylosuccinate lyase from Caenorhabditis briggsae.